The chain runs to 353 residues: MRVVKRIAVACYLGITIFSGIAFGYEGSFPSSSLEQNPSGVAIHNRVLFKIDEDTVVTTLDVIHKLNILFYSTCPQLVDSVSARSQYYSAMWPVVLESVINEFLMAADAKEKKIFIDPTSVNQEIEAMFGRDLSPFAKFFDMTPGDIFNVVHRVLVAQRIEGMMVRSRVMLKVTPGMVRDRYQKLVEDASQVSQWTYRVLTIKAGSELLANKIAGKVQERLNEGDSWDKERLAAMVLSQGGQLICSDEFIREDAQLSAAHKKALEEINFPEERCGKALEHASGLKLFVLFDCSTKTLEPLEKMEAQIKQRLMMELAEEEEANYKNKLRARYGFDPSIITQLLSEDAPQLFSLL.

An N-terminal signal peptide occupies residues 1 to 24 (MRVVKRIAVACYLGITIFSGIAFG).

The protein belongs to the chlamydial CPn_1058/CT_355/TC_0634 family.

This is an uncharacterized protein from Chlamydia muridarum (strain MoPn / Nigg).